The sequence spans 317 residues: Putrescine transport system permease protein PotH (317 aa).

The Cytoplasmic segment spans residues 1–31 (MSTLEPAAQSKPPGGFKLWLSQLQMKHGRKL). The helical transmembrane segment at 32–51 (VIALPYIWLILLFLLPFLIV) threads the bilayer. Topologically, residues 52–104 (FKISLAEMARAIPPYTELMEWADGQLSITLNLGNFLQLTDDPLYFDAYLQSLQ) are periplasmic. The ABC transmembrane type-1 domain maps to 99–305 (YLQSLQVAAI…LLLIVPIMWF (207 aa)). A helical transmembrane segment spans residues 105–124 (VAAISTFCCLLIGYPLAWAV). Residues 125–133 (AHSKPSTRN) lie on the Cytoplasmic side of the membrane. Residues 134–153 (ILLLLVILPSWTSFLIRVYA) traverse the membrane as a helical segment. Residues 154 to 184 (WMGILKNNGVLNNFLLWLGVIDQPLTILHTN) are Periplasmic-facing. Residues 185 to 204 (LAVYIGIVYAYVPFMVLPIY) traverse the membrane as a helical segment. Over 205-239 (TALIRIDYSLVEAALDLGARPLKTFFTVIVPLTKG) the chain is Cytoplasmic. A helical membrane pass occupies residues 240 to 259 (GIIAGSMLVFIPAVGEFVIP). The Periplasmic portion of the chain corresponds to 260–284 (ELLGGPDSIMIGRVLWQEFFNNRDW). A helical transmembrane segment spans residues 285 to 304 (PVASAVAIIMLLLLIVPIMW). Topologically, residues 305 to 317 (FHKHQQKSVGEHG) are cytoplasmic.

The protein belongs to the binding-protein-dependent transport system permease family. CysTW subfamily. In terms of assembly, the complex is composed of two ATP-binding proteins (PotG), two transmembrane proteins (PotH and PotI) and a solute-binding protein (PotF).

The protein localises to the cell inner membrane. Transport is feedback inhibited by intracellular polyamines. Part of the ABC transporter complex PotFGHI involved in putrescine uptake. Responsible for the translocation of the substrate across the membrane. Imports putrescine for maintenance of the optimal concentration of polyamines necessary for cell growth in the presence of glucose. The sequence is that of Putrescine transport system permease protein PotH from Escherichia coli (strain K12).